A 479-amino-acid chain; its full sequence is Catalase A (479 aa).

Positions methionine 1–serine 21 are enriched in polar residues. The segment at methionine 1–arginine 25 is disordered. Active-site residues include histidine 53 and asparagine 126. Tyrosine 336 contacts heme. A disordered region spans residues glutamine 350–serine 376. The span at asparagine 361 to serine 376 shows a compositional bias: polar residues.

Belongs to the catalase family. Heme serves as cofactor.

The enzyme catalyses 2 H2O2 = O2 + 2 H2O. Its activity is regulated as follows. Activated by peroxide. Functionally, the major expressed catalase protein in strain Corvallis in stationary phase. Decomposes hydrogen peroxide into water and oxygen; serves to protect cells from the toxic effects of hydrogen peroxide. This Pseudomonas putida (Arthrobacter siderocapsulatus) protein is Catalase A (katA).